The chain runs to 354 residues: Uroporphyrinogen decarboxylase (354 aa).

Residues 27-31 (RQAGR), aspartate 77, tyrosine 154, threonine 209, and histidine 327 contribute to the substrate site.

It belongs to the uroporphyrinogen decarboxylase family. As to quaternary structure, homodimer.

Its subcellular location is the cytoplasm. It carries out the reaction uroporphyrinogen III + 4 H(+) = coproporphyrinogen III + 4 CO2. Its pathway is porphyrin-containing compound metabolism; protoporphyrin-IX biosynthesis; coproporphyrinogen-III from 5-aminolevulinate: step 4/4. In terms of biological role, catalyzes the decarboxylation of four acetate groups of uroporphyrinogen-III to yield coproporphyrinogen-III. This Klebsiella pneumoniae (strain 342) protein is Uroporphyrinogen decarboxylase.